Reading from the N-terminus, the 278-residue chain is Secoisolariciresinol dehydrogenase (278 aa).

NAD(+) is bound by residues 23 to 28 (GGAGGI), D47, V73, and N99. The substrate site is built by S104 and S164. Y167 acts as the Proton donor/acceptor in catalysis. NAD(+)-binding residues include K171 and V200.

The protein belongs to the short-chain dehydrogenases/reductases (SDR) family. Homotetramer. As to expression, mostly expressed in stems and rhizomes, and, to a lower extent, in leaves.

It carries out the reaction (-)-secoisolariciresinol + 2 NAD(+) = (-)-matairesinol + 2 NADH + 2 H(+). Its pathway is aromatic compound metabolism; phenylpropanoid biosynthesis. Functionally, oxidoreductase involved in lignan biosynthesis. Also involved in the biosynthesis of etoposide, a chemotherapeutic compound of the topoisomerase inhibitor family. Catalyzes the stereospecific conversion of (-)-secoisolariciresinol to (-)-matairesinol via a lactol intermediate. The sequence is that of Secoisolariciresinol dehydrogenase from Sinopodophyllum hexandrum (Himalayan may apple).